Here is an 86-residue protein sequence, read N- to C-terminus: Kappa-theraphotoxin-Cg1a 1 (86 aa).

Positions 1-21 (MKVSVLITLAVLGVMFVWASA) are cleaved as a signal peptide. Residues 22-50 (AELEERGSDQRDSPAWLKSMERIFQSGER) constitute a propeptide that is removed on maturation. 3 cysteine pairs are disulfide-bonded: C52–C66, C59–C71, and C65–C78. Residues 55–56 (MF) are involved in active face. The residue at position 84 (F84) is a Phenylalanine amide.

The protein belongs to the neurotoxin 10 (Hwtx-1) family. 28 (Jztx-11) subfamily. In terms of tissue distribution, expressed by the venom gland.

Its subcellular location is the secreted. Its function is as follows. This toxin acts as a voltage-dependent gating-modifier. It inhibits the sodium conductance (IC(50)=124 nM) and slows the fast inactivation (EC(50)=1180 nM) of Nav1.5/SCN5A. It significantly shifts the activation to more depolarized voltages and decreases the deactivation of Nav1.5 currents upon extreme depolarization, but only slightly affects voltage-dependence of steady-state inactivation. In addition, this toxin causes an approximately five-fold decrease in the rate of recovery from inactivation and an approximately 1.9-fold reduction in the closed-state inactivation rate. This toxin integrates the functions of site 3 toxins (alpha-scorpion toxins) with site 4 toxins (beta-scorpion and spider toxins) by targeting multiple sites on Nav1.5. Also shows inhibition of voltage-gated potassium channels (5 uM completely inhibits Kv2.1/KCNB1, whereas 5 uM moderately inhibits Kv4.2/KCND2 Kv4.1/KCND1 channels). This chain is Kappa-theraphotoxin-Cg1a 1, found in Chilobrachys guangxiensis (Chinese earth tiger tarantula).